The primary structure comprises 551 residues: Putative transport protein NTHI0043 (551 aa).

The next 5 helical transmembrane spans lie at Ile4 to Trp24, Gly28 to Asn48, Phe65 to Ser85, Ala95 to Ala115, and Val157 to Ile177. RCK C-terminal domains are found at residues Arg191–Tyr275 and Val277–Asn360. Helical transmembrane passes span Met370–Ile390, Ala402–Phe424, Ile438–Val458, Leu463–Leu483, Tyr492–Ala512, and Val529–Trp549.

It belongs to the AAE transporter (TC 2.A.81) family. YidE subfamily.

It is found in the cell membrane. This is Putative transport protein NTHI0043 from Haemophilus influenzae (strain 86-028NP).